The following is a 533-amino-acid chain: Beta-1,4 N-acetylgalactosaminyltransferase 1 (533 aa).

At 1 to 7 (MRLDRRA) the chain is on the cytoplasmic side. The chain crosses the membrane as a helical; Signal-anchor for type II membrane protein span at residues 8-25 (LYALVLLLACASLGLLYA). The Lumenal portion of the chain corresponds to 26–533 (STRDAPGLPN…KHRLQCMTAE (508 aa)). N-linked (GlcNAc...) asparagine glycans are attached at residues asparagine 79 and asparagine 274. Cysteine 429 and cysteine 476 are disulfide-bonded.

It belongs to the glycosyltransferase 2 family. Homodimer; disulfide-linked. Strongly expressed in brain, testis, spleen, and to a lesser extent in liver.

Its subcellular location is the golgi apparatus membrane. The catalysed reaction is a ganglioside GM3 (d18:1(4E)) + UDP-N-acetyl-alpha-D-galactosamine = a ganglioside GM2 (d18:1(4E)) + UDP + H(+). It catalyses the reaction a ganglioside GD3 (d18:1(4E)) + UDP-N-acetyl-alpha-D-galactosamine = a ganglioside GD2 (d18:1(4E)) + UDP + H(+). It carries out the reaction a ganglioside GM3 + UDP-N-acetyl-alpha-D-galactosamine = a ganglioside GM2 + UDP + H(+). The enzyme catalyses a ganglioside GD3 + UDP-N-acetyl-alpha-D-galactosamine = a ganglioside GD2 + UDP + H(+). The catalysed reaction is a ganglioside GD1a + UDP-N-acetyl-alpha-D-galactosamine = a ganglioside GalNAc-GD1a + UDP + H(+). It catalyses the reaction a ganglioside GT3 (d18:1(4E)) + UDP-N-acetyl-alpha-D-galactosamine = a ganglioside GT2 (d18:1(4E)) + UDP + H(+). It carries out the reaction a beta-D-Gal-(1-&gt;4)-beta-D-Glc-(1&lt;-&gt;1)-Cer(d18:1(4E)) + UDP-N-acetyl-alpha-D-galactosamine = a ganglioside GA2 (d18:1(4E)) + UDP + H(+). The enzyme catalyses a neolactoside IV(3)-alpha-NeuGc-nLc4Cer + UDP-N-acetyl-alpha-D-galactosamine = a neolactoside IV(4)-beta-GalNAc-IV(3)-alpha-NeuGc-nLc4Cer + UDP + H(+). The protein operates within sphingolipid metabolism. Involved in the biosynthesis of gangliosides GM2, GD2, GT2 and GA2 from GM3, GD3, GT3 and GA3, respectively. The chain is Beta-1,4 N-acetylgalactosaminyltransferase 1 from Rattus norvegicus (Rat).